Here is a 66-residue protein sequence, read N- to C-terminus: Large ribosomal subunit protein bL35 (66 aa).

The protein belongs to the bacterial ribosomal protein bL35 family.

The protein is Large ribosomal subunit protein bL35 of Acholeplasma laidlawii (strain PG-8A).